Here is a 312-residue protein sequence, read N- to C-terminus: Protein-methionine-sulfoxide reductase catalytic subunit MsrP (312 aa).

A signal peptide (tat-type signal) is located at residues 1-45; sequence MPVYRPPRIAASEITPERFFLDRRSFLAAAGGLVLGGTGMAHAAA. Mo-molybdopterin-binding positions include N69, 72-73, C126, T161, N211, R216, and 227-229; these read YE and GIK.

The protein belongs to the MsrP family. As to quaternary structure, heterodimer of a catalytic subunit (MsrP) and a heme-binding subunit (MsrQ). It depends on Mo-molybdopterin as a cofactor. In terms of processing, predicted to be exported by the Tat system. The position of the signal peptide cleavage has not been experimentally proven.

The protein resides in the periplasm. The enzyme catalyses L-methionyl-[protein] + a quinone + H2O = L-methionyl-(S)-S-oxide-[protein] + a quinol. It carries out the reaction L-methionyl-[protein] + a quinone + H2O = L-methionyl-(R)-S-oxide-[protein] + a quinol. In terms of biological role, part of the MsrPQ system that repairs oxidized periplasmic proteins containing methionine sulfoxide residues (Met-O), using respiratory chain electrons. Thus protects these proteins from oxidative-stress damage caused by reactive species of oxygen and chlorine generated by the host defense mechanisms. MsrPQ is essential for the maintenance of envelope integrity under bleach stress, rescuing a wide series of structurally unrelated periplasmic proteins from methionine oxidation. The catalytic subunit MsrP is non-stereospecific, being able to reduce both (R-) and (S-) diastereoisomers of methionine sulfoxide. This chain is Protein-methionine-sulfoxide reductase catalytic subunit MsrP, found in Sinorhizobium fredii (strain NBRC 101917 / NGR234).